The chain runs to 505 residues: Probable cytosol aminopeptidase (505 aa).

Residues Lys-269 and Asp-274 each coordinate Mn(2+). Residue Lys-281 is part of the active site. The Mn(2+) site is built by Asp-292, Asp-351, and Glu-353. Residue Arg-355 is part of the active site.

The protein belongs to the peptidase M17 family. Mn(2+) is required as a cofactor.

It localises to the cytoplasm. It carries out the reaction Release of an N-terminal amino acid, Xaa-|-Yaa-, in which Xaa is preferably Leu, but may be other amino acids including Pro although not Arg or Lys, and Yaa may be Pro. Amino acid amides and methyl esters are also readily hydrolyzed, but rates on arylamides are exceedingly low.. The enzyme catalyses Release of an N-terminal amino acid, preferentially leucine, but not glutamic or aspartic acids.. Presumably involved in the processing and regular turnover of intracellular proteins. Catalyzes the removal of unsubstituted N-terminal amino acids from various peptides. This Rhodococcus jostii (strain RHA1) protein is Probable cytosol aminopeptidase.